The sequence spans 125 residues: Large ribosomal subunit protein uL22c (125 aa).

It belongs to the universal ribosomal protein uL22 family. As to quaternary structure, part of the 50S ribosomal subunit.

The protein localises to the plastid. It localises to the chloroplast. This protein binds specifically to 23S rRNA. In terms of biological role, the globular domain of the protein is located near the polypeptide exit tunnel on the outside of the subunit, while an extended beta-hairpin is found that lines the wall of the exit tunnel in the center of the 70S ribosome. The protein is Large ribosomal subunit protein uL22c (rpl22) of Nymphaea alba (White water-lily).